Consider the following 156-residue polypeptide: Ribosomal RNA large subunit methyltransferase H (156 aa).

Residues Leu-73, Gly-104, and 123–128 (IGPLTL) each bind S-adenosyl-L-methionine.

This sequence belongs to the RNA methyltransferase RlmH family. In terms of assembly, homodimer.

Its subcellular location is the cytoplasm. It carries out the reaction pseudouridine(1915) in 23S rRNA + S-adenosyl-L-methionine = N(3)-methylpseudouridine(1915) in 23S rRNA + S-adenosyl-L-homocysteine + H(+). In terms of biological role, specifically methylates the pseudouridine at position 1915 (m3Psi1915) in 23S rRNA. The sequence is that of Ribosomal RNA large subunit methyltransferase H from Stenotrophomonas maltophilia (strain R551-3).